We begin with the raw amino-acid sequence, 444 residues long: Ribosomal protein uS12 methylthiotransferase RimO (444 aa).

Residues 4–118 (IKYGVVSLGC…LSDAIKKSIE (115 aa)) form the MTTase N-terminal domain. Residues Cys13, Cys48, Cys81, Cys155, Cys159, and Cys162 each contribute to the [4Fe-4S] cluster site. One can recognise a Radical SAM core domain in the interval 141 to 373 (TTQKHYAYLR…MQRDIVKSIN (233 aa)). The 67-residue stretch at 374–440 (ADKVNKVYKV…EYDLIGVVCD (67 aa)) folds into the TRAM domain.

It belongs to the methylthiotransferase family. RimO subfamily. It depends on [4Fe-4S] cluster as a cofactor.

The protein resides in the cytoplasm. It carries out the reaction L-aspartate(89)-[ribosomal protein uS12]-hydrogen + (sulfur carrier)-SH + AH2 + 2 S-adenosyl-L-methionine = 3-methylsulfanyl-L-aspartate(89)-[ribosomal protein uS12]-hydrogen + (sulfur carrier)-H + 5'-deoxyadenosine + L-methionine + A + S-adenosyl-L-homocysteine + 2 H(+). Catalyzes the methylthiolation of an aspartic acid residue of ribosomal protein uS12. The sequence is that of Ribosomal protein uS12 methylthiotransferase RimO from Clostridium tetani (strain Massachusetts / E88).